Reading from the N-terminus, the 229-residue chain is Germin-like protein 12-1 (229 aa).

The signal sequence occupies residues 1 to 22 (MASSNFFLPTALIALVATQAMA). An intrachain disulfide couples C32 to C47. The Cupin type-1 domain maps to 62–217 (ANLDKPMDTT…AFQVDKKAVD (156 aa)). N-linked (GlcNAc...) asparagine glycosylation is present at N78. Residues H111, H113, E118, and H162 each contribute to the Mn(2+) site.

It belongs to the germin family. In terms of assembly, oligomer (believed to be a pentamer but probably hexamer).

The protein resides in the secreted. It localises to the extracellular space. Its subcellular location is the apoplast. Functionally, may play a role in plant defense. Probably has no oxalate oxidase activity even if the active site is conserved. The polypeptide is Germin-like protein 12-1 (Oryza sativa subsp. japonica (Rice)).